The chain runs to 315 residues: Ribosomal protein L11 methyltransferase (315 aa).

Residues T152, G185, D207, and N249 each contribute to the S-adenosyl-L-methionine site.

It belongs to the methyltransferase superfamily. PrmA family.

It localises to the cytoplasm. The catalysed reaction is L-lysyl-[protein] + 3 S-adenosyl-L-methionine = N(6),N(6),N(6)-trimethyl-L-lysyl-[protein] + 3 S-adenosyl-L-homocysteine + 3 H(+). In terms of biological role, methylates ribosomal protein L11. The polypeptide is Ribosomal protein L11 methyltransferase (Geotalea uraniireducens (strain Rf4) (Geobacter uraniireducens)).